We begin with the raw amino-acid sequence, 972 residues long: Protein NRDE2 homolog (972 aa).

The segment covering 1-17 (MPSNHNTSVPKFSSFNS) has biased composition (polar residues). The segment at 1–61 (MPSNHNTSVP…RSIQSNFAVD (61 aa)) is disordered. Positions 19-33 (KAKKNPITKSNKKYR) are enriched in basic residues. A compositionally biased stretch (polar residues) spans 37-59 (DQVSSNHAKSSFPSHRSIQSNFA). HAT repeat units follow at residues 159-191 (LNIL…YQER), 250-282 (WSKE…YFTG), 318-350 (TDVT…YELA), 355-386 (QANM…FWNS), 608-640 (EEKP…LEHL), 788-820 (YNLP…FESK), and 860-894 (TNSQ…ILNL). S970 is modified (phosphoserine).

Belongs to the NRDE2 family.

It is found in the nucleus. The polypeptide is Protein NRDE2 homolog (Schizosaccharomyces pombe (strain 972 / ATCC 24843) (Fission yeast)).